The chain runs to 273 residues: Putative phosphoenolpyruvate synthase regulatory protein (273 aa).

Residue glycine 153 to threonine 160 participates in ADP binding.

It belongs to the pyruvate, phosphate/water dikinase regulatory protein family. PSRP subfamily.

It catalyses the reaction [pyruvate, water dikinase] + ADP = [pyruvate, water dikinase]-phosphate + AMP + H(+). The catalysed reaction is [pyruvate, water dikinase]-phosphate + phosphate + H(+) = [pyruvate, water dikinase] + diphosphate. Functionally, bifunctional serine/threonine kinase and phosphorylase involved in the regulation of the phosphoenolpyruvate synthase (PEPS) by catalyzing its phosphorylation/dephosphorylation. The polypeptide is Putative phosphoenolpyruvate synthase regulatory protein (Yersinia enterocolitica serotype O:8 / biotype 1B (strain NCTC 13174 / 8081)).